The primary structure comprises 355 residues: Anthranilate phosphoribosyltransferase (355 aa).

Residues Gly-85, 88–89, Thr-93, 95–98, 113–121, and Ser-125 each bind 5-phospho-alpha-D-ribose 1-diphosphate; these read GD, NIST, and KHGNRAASS. Gly-85 lines the anthranilate pocket. Residue Ser-97 participates in Mg(2+) binding. Residue Asn-116 coordinates anthranilate. Arg-171 is an anthranilate binding site. Mg(2+)-binding residues include Asp-229 and Glu-230.

This sequence belongs to the anthranilate phosphoribosyltransferase family. Homodimer. Requires Mg(2+) as cofactor.

The enzyme catalyses N-(5-phospho-beta-D-ribosyl)anthranilate + diphosphate = 5-phospho-alpha-D-ribose 1-diphosphate + anthranilate. It participates in amino-acid biosynthesis; L-tryptophan biosynthesis; L-tryptophan from chorismate: step 2/5. Functionally, catalyzes the transfer of the phosphoribosyl group of 5-phosphorylribose-1-pyrophosphate (PRPP) to anthranilate to yield N-(5'-phosphoribosyl)-anthranilate (PRA). The polypeptide is Anthranilate phosphoribosyltransferase (Acidothermus cellulolyticus (strain ATCC 43068 / DSM 8971 / 11B)).